Reading from the N-terminus, the 475-residue chain is tRNA-2-methylthio-N(6)-dimethylallyladenosine synthase (475 aa).

The region spanning 2–119 is the MTTase N-terminal domain; sequence AKLHITTWGC…LPEMINKIRG (118 aa). Residues cysteine 11, cysteine 48, cysteine 82, cysteine 156, cysteine 160, and cysteine 163 each coordinate [4Fe-4S] cluster. One can recognise a Radical SAM core domain in the interval 142-374; it reads RAEGPTAFVS…QQRINHQAMQ (233 aa). In terms of domain architecture, TRAM spans 377–440; the sequence is RAMLGTEQRV…TNSLRGDVVR (64 aa).

It belongs to the methylthiotransferase family. MiaB subfamily. Monomer. Requires [4Fe-4S] cluster as cofactor.

It localises to the cytoplasm. It carries out the reaction N(6)-dimethylallyladenosine(37) in tRNA + (sulfur carrier)-SH + AH2 + 2 S-adenosyl-L-methionine = 2-methylsulfanyl-N(6)-dimethylallyladenosine(37) in tRNA + (sulfur carrier)-H + 5'-deoxyadenosine + L-methionine + A + S-adenosyl-L-homocysteine + 2 H(+). Catalyzes the methylthiolation of N6-(dimethylallyl)adenosine (i(6)A), leading to the formation of 2-methylthio-N6-(dimethylallyl)adenosine (ms(2)i(6)A) at position 37 in tRNAs that read codons beginning with uridine. In Actinobacillus pleuropneumoniae serotype 5b (strain L20), this protein is tRNA-2-methylthio-N(6)-dimethylallyladenosine synthase.